We begin with the raw amino-acid sequence, 368 residues long: tRNA-specific 2-thiouridylase MnmA (368 aa).

Residues 11–18 and Met37 contribute to the ATP site; that span reads GMSGGVDS. The segment at 97 to 99 is interaction with target base in tRNA; the sequence is NPD. Cys102 acts as the Nucleophile in catalysis. A disulfide bridge links Cys102 with Cys199. Gly127 contacts ATP. Positions 149 to 151 are interaction with tRNA; that stretch reads KDQ. The active-site Cysteine persulfide intermediate is the Cys199. Positions 311–312 are interaction with tRNA; that stretch reads RY.

This sequence belongs to the MnmA/TRMU family. In terms of assembly, interacts with TusE.

The protein localises to the cytoplasm. It catalyses the reaction S-sulfanyl-L-cysteinyl-[protein] + uridine(34) in tRNA + AH2 + ATP = 2-thiouridine(34) in tRNA + L-cysteinyl-[protein] + A + AMP + diphosphate + H(+). Catalyzes the 2-thiolation of uridine at the wobble position (U34) of tRNA(Lys), tRNA(Glu) and tRNA(Gln), leading to the formation of s(2)U34, the first step of tRNA-mnm(5)s(2)U34 synthesis. Sulfur is provided by IscS, via a sulfur-relay system. Binds ATP and its substrate tRNAs. The protein is tRNA-specific 2-thiouridylase MnmA of Salmonella choleraesuis (strain SC-B67).